A 114-amino-acid polypeptide reads, in one-letter code: UPF0145 protein YG5714_0873 (114 aa).

The protein belongs to the UPF0145 family.

The chain is UPF0145 protein YG5714_0873 from Saccharolobus islandicus (strain Y.G.57.14 / Yellowstone #1) (Sulfolobus islandicus).